The following is a 210-amino-acid chain: Small ribosomal subunit protein uS3 (210 aa).

The KH type-2 domain occupies 38–106 (LKSFLKKRLY…EVYLNIQEVR (69 aa)).

Belongs to the universal ribosomal protein uS3 family. As to quaternary structure, part of the 30S ribosomal subunit. Forms a tight complex with proteins S10 and S14.

In terms of biological role, binds the lower part of the 30S subunit head. Binds mRNA in the 70S ribosome, positioning it for translation. This is Small ribosomal subunit protein uS3 from Geotalea daltonii (strain DSM 22248 / JCM 15807 / FRC-32) (Geobacter daltonii).